Here is a 423-residue protein sequence, read N- to C-terminus: Glutamate--cysteine ligase EgtA (423 aa).

It belongs to the glutamate--cysteine ligase type 2 family. EgtA subfamily.

The enzyme catalyses L-cysteine + L-glutamate + ATP = gamma-L-glutamyl-L-cysteine + ADP + phosphate + H(+). Its pathway is amino-acid biosynthesis; ergothioneine biosynthesis. Catalyzes the synthesis of gamma-glutamylcysteine (gamma-GC). This compound is used as substrate for the biosynthesis of the low-molecular thiol compound ergothioneine. This Mycolicibacterium smegmatis (strain ATCC 700084 / mc(2)155) (Mycobacterium smegmatis) protein is Glutamate--cysteine ligase EgtA.